Consider the following 204-residue polypeptide: Regulatory protein RecX (204 aa).

Residues 1–22 (MTKSSRPQSISDSVSVAGSQGT) show a composition bias toward polar residues. Positions 1-44 (MTKSSRPQSISDSVSVAGSQGTLDDLRARVASVPEAPTREPVDS) are disordered.

This sequence belongs to the RecX family.

It localises to the cytoplasm. Functionally, modulates RecA activity. This Mycobacteroides abscessus (strain ATCC 19977 / DSM 44196 / CCUG 20993 / CIP 104536 / JCM 13569 / NCTC 13031 / TMC 1543 / L948) (Mycobacterium abscessus) protein is Regulatory protein RecX.